Here is a 116-residue protein sequence, read N- to C-terminus: Protein Rev (116 aa).

Residues Ser5 and Ser8 each carry the phosphoserine; by host CK2 modification. Residues 18–26 (YIKILYQSN) form a homomultimerization region. The interval 26–48 (NPYPKPEGTRQARRNRRRRWRAR) is disordered. The short motif at 34–50 (TRQARRNRRRRWRARQR) is the Nuclear localization signal and RNA-binding (RRE) element. Basic residues predominate over residues 36–48 (QARRNRRRRWRAR). A Nuclear export signal and binding to XPO1 motif is present at residues 73-84 (LQLPPLERLHIN). The disordered stretch occupies residues 89–116 (CGQGAEEGVGSSQISGESHTVLGSGTKE). The span at 98 to 116 (GSSQISGESHTVLGSGTKE) shows a compositional bias: polar residues. At Ser99 the chain carries Phosphoserine; by host.

It belongs to the HIV-1 REV protein family. As to quaternary structure, homomultimer; when bound to the RRE. Multimeric assembly is essential for activity and may involve XPO1. Binds to human KPNB1, XPO1, TNPO1, RANBP5 and IPO7. Interacts with the viral Integrase. Interacts with human KHDRBS1. Interacts with human NAP1; this interaction decreases Rev multimerization and stimulates its activity. Interacts with human DEAD-box helicases DDX3 and DDX24; these interactions may serve for viral RNA export to the cytoplasm and packaging, respectively. Interacts with human PSIP1; this interaction may inhibit HIV-1 DNA integration by promoting dissociation of the Integrase-LEDGF/p75 complex. Asymmetrically arginine dimethylated at one site by host PRMT6. Methylation impairs the RNA-binding activity and export of viral RNA from the nucleus to the cytoplasm. Post-translationally, phosphorylated by protein kinase CK2. Presence of, and maybe binding to the N-terminus of the regulatory beta subunit of CK2 is necessary for CK2-mediated Rev's phosphorylation.

It localises to the host nucleus. The protein resides in the host nucleolus. The protein localises to the host cytoplasm. Its function is as follows. Escorts unspliced or incompletely spliced viral pre-mRNAs (late transcripts) out of the nucleus of infected cells. These pre-mRNAs carry a recognition sequence called Rev responsive element (RRE) located in the env gene, that is not present in fully spliced viral mRNAs (early transcripts). This function is essential since most viral proteins are translated from unspliced or partially spliced pre-mRNAs which cannot exit the nucleus by the pathway used by fully processed cellular mRNAs. Rev itself is translated from a fully spliced mRNA that readily exits the nucleus. Rev's nuclear localization signal (NLS) binds directly to KPNB1/Importin beta-1 without previous binding to KPNA1/Importin alpha-1. KPNB1 binds to the GDP bound form of RAN (Ran-GDP) and targets Rev to the nucleus. In the nucleus, the conversion from Ran-GDP to Ran-GTP dissociates Rev from KPNB1 and allows Rev's binding to the RRE in viral pre-mRNAs. Rev multimerization on the RRE via cooperative assembly exposes its nuclear export signal (NES) to the surface. Rev can then form a complex with XPO1/CRM1 and Ran-GTP, leading to nuclear export of the complex. Conversion from Ran-GTP to Ran-GDP mediates dissociation of the Rev/RRE/XPO1/RAN complex, so that Rev can return to the nucleus for a subsequent round of export. Beside KPNB1, also seems to interact with TNPO1/Transportin-1, RANBP5/IPO5 and IPO7/RANBP7 for nuclear import. The nucleoporin-like HRB/RIP is an essential cofactor that probably indirectly interacts with Rev to release HIV RNAs from the perinuclear region to the cytoplasm. The sequence is that of Protein Rev from Homo sapiens (Human).